The primary structure comprises 166 residues: Putative 4-hydroxy-4-methyl-2-oxoglutarate aldolase 3 (166 aa).

Ala-2 bears the N-acetylalanine mark. Substrate contacts are provided by residues 81–84 (GGNL) and Arg-103. Asp-104 provides a ligand contact to a divalent metal cation.

It belongs to the class II aldolase/RraA-like family. Homotrimer. The cofactor is a divalent metal cation.

It carries out the reaction 4-hydroxy-4-methyl-2-oxoglutarate = 2 pyruvate. The catalysed reaction is oxaloacetate + H(+) = pyruvate + CO2. Its function is as follows. Catalyzes the aldol cleavage of 4-hydroxy-4-methyl-2-oxoglutarate (HMG) into 2 molecules of pyruvate. Also contains a secondary oxaloacetate (OAA) decarboxylase activity due to the common pyruvate enolate transition state formed following C-C bond cleavage in the retro-aldol and decarboxylation reactions. The chain is Putative 4-hydroxy-4-methyl-2-oxoglutarate aldolase 3 from Arabidopsis thaliana (Mouse-ear cress).